The sequence spans 925 residues: Serine/threonine-protein kinase PLK4 (925 aa).

The Protein kinase domain maps to 12 to 265 (FKVGNLLGKG…LSSVLDHPFM (254 aa)). ATP-binding positions include 18 to 26 (LGKGSFAGV) and lysine 41. Lysine 45 and lysine 46 each carry N6-acetyllysine. The active-site Proton acceptor is the aspartate 136. Disordered regions lie at residues 262–283 (HPFMSRNPSPKSKDVGTVEDSM) and 328–394 (KNSS…KTYS). Residues 330 to 341 (SSDFSSGDGSNF) show a composition bias toward low complexity. A compositionally biased stretch (polar residues) spans 342-353 (CTQWGNPEQEAN). Basic and acidic residues predominate over residues 359–369 (RVIEDAEERPH). Residues 381 to 391 (RASPSNQSRAK) show a composition bias toward polar residues. Serine 400 is subject to Phosphoserine. Positions 517-538 (EVMPQEPGLHPHSEQSKNRSME) are disordered. Positions 525–536 (LHPHSEQSKNRS) are enriched in basic and acidic residues. A Cryptic POLO box 1 (CPB1) domain is found at 547 to 660 (TLRSITSPLI…SRFIQLVRSK (114 aa)). The region spanning 661 to 774 (TPKITYFTRY…GRKPGNTSSP (114 aa)) is the Cryptic POLO box 2 (CPB2) domain. The residue at position 778 (serine 778) is a Phosphoserine. The POLO box domain maps to 841-919 (QLLKSVFVKN…LSSILLMFSN (79 aa)).

This sequence belongs to the protein kinase superfamily. Ser/Thr protein kinase family. CDC5/Polo subfamily. In terms of assembly, homodimer. Interacts with CEP152 (via N-terminus). Interacts with CEP78; this interaction may be important for proper PLK4 localization to the centriole and PLK4-induced overduplication of centrioles. Interacts with CEP131. Interacts simultaneously with TENT5C and CEP192. Interacts with TENT5C; this interaction leads to the TENT5C recruitment in the centrosome. Interacts with CEP85; this interaction may be important in cell migration and centriole assembly. In terms of processing, ubiquitinated; leading to its degradation by the proteasome. Deubiquitinated by USP54; leading to PLK4 stabilization. Post-translationally, tyrosine-phosphorylated by TEC. Acetylation by KAT2A and KAT2B impairs kinase activity by shifting the kinase to an inactive conformation. As to expression, expressed in tissues associated with mitotic and meiotic cell division. Highly expressed in testis.

The protein resides in the cytoplasm. It is found in the cytoskeleton. The protein localises to the microtubule organizing center. It localises to the centrosome. Its subcellular location is the centriole. The protein resides in the nucleus. It is found in the nucleolus. The protein localises to the cleavage furrow. The catalysed reaction is L-seryl-[protein] + ATP = O-phospho-L-seryl-[protein] + ADP + H(+). It carries out the reaction L-threonyl-[protein] + ATP = O-phospho-L-threonyl-[protein] + ADP + H(+). In terms of biological role, serine/threonine-protein kinase that plays a central role in centriole duplication. Able to trigger procentriole formation on the surface of the parental centriole cylinder, leading to the recruitment of centriole biogenesis proteins such as SASS6, CPAP, CCP110, CEP135 and gamma-tubulin. When overexpressed, it is able to induce centrosome amplification through the simultaneous generation of multiple procentrioles adjoining each parental centriole during S phase. Phosphorylates 'Ser-151' of FBXW5 during the G1/S transition, leading to inhibit FBXW5 ability to ubiquitinate SASS6. Its central role in centriole replication suggests a possible role in tumorigenesis, centrosome aberrations being frequently observed in tumors. Phosphorylates CDC25C and CHEK2. Also involved in deuterosome-mediated centriole amplification in multiciliated that can generate more than 100 centrioles. Also involved in trophoblast differentiation by phosphorylating HAND1, leading to disrupt the interaction between HAND1 and MDFIC and activate HAND1. Required for the recruitment of STIL to the centriole and for STIL-mediated centriole amplification. Phosphorylates CEP131 at 'Ser-78' and PCM1 at 'Ser-372' which is essential for proper organization and integrity of centriolar satellites. This Mus musculus (Mouse) protein is Serine/threonine-protein kinase PLK4.